An 88-amino-acid polypeptide reads, in one-letter code: Small ribosomal subunit protein bS16 (88 aa).

It belongs to the bacterial ribosomal protein bS16 family.

The protein is Small ribosomal subunit protein bS16 of Mycoplasmopsis pulmonis (strain UAB CTIP) (Mycoplasma pulmonis).